The sequence spans 438 residues: Histidine--tRNA ligase (438 aa).

The protein belongs to the class-II aminoacyl-tRNA synthetase family. As to quaternary structure, homodimer.

It is found in the cytoplasm. The enzyme catalyses tRNA(His) + L-histidine + ATP = L-histidyl-tRNA(His) + AMP + diphosphate + H(+). This Thermobifida fusca (strain YX) protein is Histidine--tRNA ligase (hisS).